The following is a 105-amino-acid chain: MISSKFGIGQQVRHKLLGYLGVIIDVDPEYSLEKPSLEEISADDSLRRSPWYYVVMEDEDGKPVHTYLAEAQLGYEISPVHPEQPKLDELSASIKKQLKTPRLRN.

Residues 84–105 (QPKLDELSASIKKQLKTPRLRN) form a disordered region. Residues 96-105 (KQLKTPRLRN) are compositionally biased toward basic residues.

It belongs to the HspQ family.

The protein localises to the cytoplasm. Involved in the degradation of certain denaturated proteins, including DnaA, during heat shock stress. The chain is Heat shock protein HspQ from Wigglesworthia glossinidia brevipalpis.